The following is a 225-amino-acid chain: Chalcone--flavanone isomerase 3 (225 aa).

Substrate contacts are provided by Thr51, Asn116, and Thr193.

The protein belongs to the chalcone isomerase family.

The catalysed reaction is a chalcone = a flavanone.. It participates in secondary metabolite biosynthesis; flavonoid biosynthesis. In terms of biological role, catalyzes the intramolecular cyclization of bicyclic chalcones into tricyclic (S)-flavanones. Responsible for the isomerization of 4,2',4',6'-tetrahydroxychalcone (also termed chalcone) into naringenin. This Lotus japonicus (Lotus corniculatus var. japonicus) protein is Chalcone--flavanone isomerase 3 (CHI3).